Reading from the N-terminus, the 77-residue chain is Liver-expressed antimicrobial peptide 2 (77 aa).

The signal sequence occupies residues 1-22 (MWHLKLFAVLVICLLLAVQVHG). Residues 23 to 37 (SPIPELSSAKRRPRR) constitute a propeptide that is removed on maturation. 2 cysteine pairs are disulfide-bonded: Cys-54–Cys-65 and Cys-60–Cys-70.

It belongs to the LEAP2 family.

It is found in the secreted. Has an antimicrobial activity. The sequence is that of Liver-expressed antimicrobial peptide 2 (LEAP2) from Sus scrofa (Pig).